Consider the following 363-residue polypeptide: Flagellar P-ring protein (363 aa).

An N-terminal signal peptide occupies residues 1-20; that stretch reads MKLKLILAVAMLAFSLPSQA.

This sequence belongs to the FlgI family. In terms of assembly, the basal body constitutes a major portion of the flagellar organelle and consists of four rings (L,P,S, and M) mounted on a central rod.

Its subcellular location is the periplasm. It localises to the bacterial flagellum basal body. Assembles around the rod to form the L-ring and probably protects the motor/basal body from shearing forces during rotation. In Shewanella sp. (strain MR-7), this protein is Flagellar P-ring protein.